The following is a 527-amino-acid chain: GMP synthase [glutamine-hydrolyzing] (527 aa).

The Glutamine amidotransferase type-1 domain maps to 20–208 (SVVILDYGSQ…LFDVCGCAPT (189 aa)). The Nucleophile role is filled by Cys97. Catalysis depends on residues His182 and Glu184. The region spanning 209-402 (WTAESFVEQA…LGLPEEIVQR (194 aa)) is the GMPS ATP-PPase domain. 236–242 (SGGVDSS) lines the ATP pocket.

In terms of assembly, homodimer.

The catalysed reaction is XMP + L-glutamine + ATP + H2O = GMP + L-glutamate + AMP + diphosphate + 2 H(+). It functions in the pathway purine metabolism; GMP biosynthesis; GMP from XMP (L-Gln route): step 1/1. In terms of biological role, catalyzes the synthesis of GMP from XMP. In Thermomicrobium roseum (strain ATCC 27502 / DSM 5159 / P-2), this protein is GMP synthase [glutamine-hydrolyzing].